The following is a 374-amino-acid chain: Alanine racemase (374 aa).

Lys-34 (proton acceptor; specific for D-alanine) is an active-site residue. At Lys-34 the chain carries N6-(pyridoxal phosphate)lysine. Substrate is bound at residue Arg-147. Residue Tyr-271 is the Proton acceptor; specific for L-alanine of the active site. Met-319 is a binding site for substrate.

It belongs to the alanine racemase family. Pyridoxal 5'-phosphate serves as cofactor.

The catalysed reaction is L-alanine = D-alanine. It participates in amino-acid biosynthesis; D-alanine biosynthesis; D-alanine from L-alanine: step 1/1. Its function is as follows. Catalyzes the interconversion of L-alanine and D-alanine. May also act on other amino acids. This is Alanine racemase (alr) from Haemophilus ducreyi (strain 35000HP / ATCC 700724).